Reading from the N-terminus, the 173-residue chain is Crossover junction endodeoxyribonuclease RuvC (173 aa).

Residues Asp8, Glu67, and Asp139 contribute to the active site. Residues Asp8, Glu67, and Asp139 each contribute to the Mg(2+) site.

This sequence belongs to the RuvC family. In terms of assembly, homodimer which binds Holliday junction (HJ) DNA. The HJ becomes 2-fold symmetrical on binding to RuvC with unstacked arms; it has a different conformation from HJ DNA in complex with RuvA. In the full resolvosome a probable DNA-RuvA(4)-RuvB(12)-RuvC(2) complex forms which resolves the HJ. Mg(2+) is required as a cofactor.

It localises to the cytoplasm. The enzyme catalyses Endonucleolytic cleavage at a junction such as a reciprocal single-stranded crossover between two homologous DNA duplexes (Holliday junction).. Its function is as follows. The RuvA-RuvB-RuvC complex processes Holliday junction (HJ) DNA during genetic recombination and DNA repair. Endonuclease that resolves HJ intermediates. Cleaves cruciform DNA by making single-stranded nicks across the HJ at symmetrical positions within the homologous arms, yielding a 5'-phosphate and a 3'-hydroxyl group; requires a central core of homology in the junction. The consensus cleavage sequence is 5'-(A/T)TT(C/G)-3'. Cleavage occurs on the 3'-side of the TT dinucleotide at the point of strand exchange. HJ branch migration catalyzed by RuvA-RuvB allows RuvC to scan DNA until it finds its consensus sequence, where it cleaves and resolves the cruciform DNA. The polypeptide is Crossover junction endodeoxyribonuclease RuvC (Cronobacter sakazakii (strain ATCC BAA-894) (Enterobacter sakazakii)).